The sequence spans 445 residues: Ribosomal protein uS12 methylthiotransferase RimO (445 aa).

The region spanning 10 to 120 is the MTTase N-terminal domain; the sequence is PKVGFVSLGC…VVNAVHEVVP (111 aa). The [4Fe-4S] cluster site is built by Cys19, Cys55, Cys84, Cys153, Cys157, and Cys160. Residues 139–378 enclose the Radical SAM core domain; the sequence is LTPRHYAYLK…AHQQAISSAR (240 aa). In terms of domain architecture, TRAM spans 380-445; sequence QLRIGREIEV…DEYDLWAEQI (66 aa).

This sequence belongs to the methylthiotransferase family. RimO subfamily. [4Fe-4S] cluster serves as cofactor.

It localises to the cytoplasm. The enzyme catalyses L-aspartate(89)-[ribosomal protein uS12]-hydrogen + (sulfur carrier)-SH + AH2 + 2 S-adenosyl-L-methionine = 3-methylsulfanyl-L-aspartate(89)-[ribosomal protein uS12]-hydrogen + (sulfur carrier)-H + 5'-deoxyadenosine + L-methionine + A + S-adenosyl-L-homocysteine + 2 H(+). Functionally, catalyzes the methylthiolation of an aspartic acid residue of ribosomal protein uS12. This Pseudomonas fluorescens (strain Pf0-1) protein is Ribosomal protein uS12 methylthiotransferase RimO.